The primary structure comprises 402 residues: Type II NADH:quinone oxidoreductase (402 aa).

Residues 12–16 (GAGYA), 39–40 (NK), and V83 contribute to the FAD site. The active site involves E172. FAD is bound by residues D302, 319–320 (AQ), and K379.

This sequence belongs to the NADH dehydrogenase family. FAD serves as cofactor.

The protein resides in the cell membrane. It catalyses the reaction a quinone + NADH + H(+) = a quinol + NAD(+). Functionally, alternative, nonproton pumping NADH:quinone oxidoreductase that delivers electrons to the respiratory chain by oxidation of NADH and reduction of quinones, and contributes to the regeneration of NAD(+). The sequence is that of Type II NADH:quinone oxidoreductase from Staphylococcus epidermidis (strain ATCC 35984 / DSM 28319 / BCRC 17069 / CCUG 31568 / BM 3577 / RP62A).